A 289-amino-acid polypeptide reads, in one-letter code: Oxaloacetate decarboxylase (289 aa).

Ser-47 is a binding site for substrate. Residue Asp-85 coordinates Mg(2+). Residues Arg-156 and His-232 each contribute to the substrate site.

It belongs to the isocitrate lyase/PEP mutase superfamily. Oxaloacetate decarboxylase family. Homotetramer; dimer of dimers. It depends on Mg(2+) as a cofactor.

The enzyme catalyses oxaloacetate + H(+) = pyruvate + CO2. In terms of biological role, catalyzes the decarboxylation of oxaloacetate into pyruvate. Seems to play a role in maintaining cellular concentrations of bicarbonate and pyruvate. The polypeptide is Oxaloacetate decarboxylase (Rhodopseudomonas palustris (strain HaA2)).